The primary structure comprises 142 residues: Small ribosomal subunit protein bS6 (142 aa).

Over residues 113–136 (IKKEPREPREPRAPREPKAEKIEE) the composition is skewed to basic and acidic residues. The segment at 113–142 (IKKEPREPREPRAPREPKAEKIEEQTFSEE) is disordered.

The protein belongs to the bacterial ribosomal protein bS6 family.

Its function is as follows. Binds together with bS18 to 16S ribosomal RNA. The chain is Small ribosomal subunit protein bS6 from Campylobacter curvus (strain 525.92).